Reading from the N-terminus, the 482-residue chain is GDP-D-glucose phosphorylase 1 (482 aa).

Positions M1–P21 are disordered. The active-site Tele-GMP-histidine intermediate is H255. A disordered region spans residues M461–K482.

The protein belongs to the GDPGP1 family. As to expression, expressed throughout the neuronal system, in the spermatheca and anterior hypodermal cells.

It localises to the cytoplasm. It carries out the reaction GDP-alpha-D-glucose + phosphate = alpha-D-glucose 1-phosphate + GDP + H(+). Specific and highly efficient GDP-D-glucose phosphorylase regulating the levels of GDP-D-glucose in cells. The sequence is that of GDP-D-glucose phosphorylase 1 from Caenorhabditis elegans.